Reading from the N-terminus, the 345-residue chain is Tryptophan--tRNA ligase (345 aa).

ATP contacts are provided by residues Q21–T23 and G30–N31. The 'HIGH' region motif lies at P22–N31. Position 147 (D147) interacts with L-tryptophan. ATP-binding positions include G159–D161, I198, and K207–S211. Positions K207–S211 match the 'KMSKS' region motif.

Belongs to the class-I aminoacyl-tRNA synthetase family. In terms of assembly, homodimer.

It localises to the cytoplasm. It catalyses the reaction tRNA(Trp) + L-tryptophan + ATP = L-tryptophyl-tRNA(Trp) + AMP + diphosphate + H(+). Catalyzes the attachment of tryptophan to tRNA(Trp). This is Tryptophan--tRNA ligase from Corynebacterium glutamicum (strain ATCC 13032 / DSM 20300 / JCM 1318 / BCRC 11384 / CCUG 27702 / LMG 3730 / NBRC 12168 / NCIMB 10025 / NRRL B-2784 / 534).